The chain runs to 226 residues: Ribonuclease 3 (226 aa).

An RNase III domain is found at 6–128 (ANKIQQILGY…LIGSIYLDSN (123 aa)). Glu41 lines the Mg(2+) pocket. Residue Asp45 is part of the active site. Mg(2+)-binding residues include Asn114 and Glu117. Glu117 is a catalytic residue. The DRBM domain occupies 155–225 (DPKTRLQEYL…ARKALIKLGV (71 aa)).

It belongs to the ribonuclease III family. Homodimer. It depends on Mg(2+) as a cofactor.

It is found in the cytoplasm. The catalysed reaction is Endonucleolytic cleavage to 5'-phosphomonoester.. In terms of biological role, digests double-stranded RNA. Involved in the processing of primary rRNA transcript to yield the immediate precursors to the large and small rRNAs (23S and 16S). Processes some mRNAs, and tRNAs when they are encoded in the rRNA operon. Processes pre-crRNA and tracrRNA of type II CRISPR loci if present in the organism. This is Ribonuclease 3 from Buchnera aphidicola subsp. Schizaphis graminum (strain Sg).